We begin with the raw amino-acid sequence, 449 residues long: MNSANDGSVKKYVSQRRTVDMSSPYDRLYFYKKHAIPLRTIQPESTYTADIMPPDAYRDHRRVLNIPTKFTHLSSNKVKHVIPAITWTPEGRRLVVATYSGEFSLWNGSSFNFESIMQAHDSAVTVMQYSHAGDWLISGDADGTIKIWQPNFNMVKVLDRAHTECMRDISFSYSDQKFVTCSDDNVLKIWNFSNGQQERVLSGHHWDVKSCDWHPKMGLIVSGSKDNLIKLWDPRTGRNVSTILGLKHTVIKTKFQPTQGNLLAVVSKDKSIKIYDMRQHMRELQTIRDDMDYMSLSWHPINETIFSVGCYNGAIKHFDLLHDNSNSTPACHTIPYAHEKSVTSLAYSPVGHILASAAKDRTIRFWARSRPVDPNAFDDPTYNNKKVNAWYFGINNNINAVRPKTEHGIALPPANETNLGTPQPSILGSESIAANNGNVPASGLPGLSF.

WD repeat units follow at residues 77–116 (KVKH…FESI), 119–158 (AHDS…VKVL), 161–200 (AHTE…QERV), 203–242 (GHHW…NVST), 245–285 (GLKH…RELQ), 288–328 (RDDM…SNST), and 337–376 (AHEK…DPNA). The segment at 411–432 (LPPANETNLGTPQPSILGSESI) is disordered. The segment covering 415–432 (NETNLGTPQPSILGSESI) has biased composition (polar residues).

It is found in the nucleus. Functionally, required for 3'-end cleavage and polyadenylation of pre-mRNAs. Also involved in chromosome segregation where it has a role in chromosome attachment to the mitotic spindle. The chain is Polyadenylation factor subunit 2 (PSF2) from Eremothecium gossypii (strain ATCC 10895 / CBS 109.51 / FGSC 9923 / NRRL Y-1056) (Yeast).